The following is a 161-amino-acid chain: Cytochrome b6-f complex subunit 4 (161 aa).

Helical transmembrane passes span 37-57, 96-116, and 132-152; these read LLYIFPVVIMGTISLVIGLAV, LLGVLIQTTIPLGLMLIPFIE, and SVFLFSVVFTLWLGIGATLPI.

This sequence belongs to the cytochrome b family. PetD subfamily. The 4 large subunits of the cytochrome b6-f complex are cytochrome b6, subunit IV (17 kDa polypeptide, PetD), cytochrome f and the Rieske protein, while the 4 small subunits are PetG, PetL, PetM and PetN. The complex functions as a dimer.

The protein resides in the cellular thylakoid membrane. Component of the cytochrome b6-f complex, which mediates electron transfer between photosystem II (PSII) and photosystem I (PSI), cyclic electron flow around PSI, and state transitions. In Acaryochloris marina (strain MBIC 11017), this protein is Cytochrome b6-f complex subunit 4.